The primary structure comprises 251 residues: NLP effector protein Pc129485 (251 aa).

Residues 1-19 form the signal peptide; the sequence is MNFRIVLLVLVASLAGAQA. Residues 127–133 carry the Hepta-peptide GHRHDWE motif motif; sequence GHRHNWE. N-linked (GlcNAc...) asparagine glycans are attached at residues asparagine 146 and asparagine 218.

It belongs to the Necrosis inducing protein (NPP1) family.

It is found in the secreted. Functionally, secreted effector that contributes strongly to virulence during infection by P.capsici. This chain is NLP effector protein Pc129485, found in Phytophthora capsici.